The chain runs to 304 residues: HTH-type transcriptional regulator BenM (304 aa).

The HTH lysR-type domain maps to 1 to 58 (MELRHLRYFVAVVEEQSFTKAADKLCIAQPPLSRQIQNLEEELGIQLLERGSRPVKTT). The H-T-H motif DNA-binding region spans 18–37 (FTKAADKLCIAQPPLSRQIQ). Positions 99 and 104 each coordinate benzoate. Residue Ser99 coordinates cis,cis-muconate. A cis,cis-muconate-binding site is contributed by Thr128. Positions 144, 160, and 202 each coordinate benzoate. Phe203 contacts cis,cis-muconate. Tyr293 is a binding site for benzoate.

It belongs to the LysR transcriptional regulatory family. Homotetramer; dimer of dimers. The dimers can also associate to form linear, higher oligomers (in vitro).

Positive regulator of the ben and cat genes for benzoate degradation. BenM is necessary for ben gene expression but not for expression of the cat genes, which can be regulated by CatM. Binds to the inducers cis,cis-muconate and benzoate. In Acinetobacter baylyi (strain ATCC 33305 / BD413 / ADP1), this protein is HTH-type transcriptional regulator BenM (benM).